We begin with the raw amino-acid sequence, 278 residues long: Rhomboid protease GlpG (278 aa).

6 helical membrane passes run 95-115, 143-163, 170-190, 192-212, 224-241, and 245-267; these read GPLTLSVMVLCIAIYILMQIV, AFLHFSLLHILFNLMWWWYLA, LGTGKLLVLTIVSALFSGWGQ, LFSGVNFGGLSGVVYALMGYV, ISLPRGLMAFSVLWLVAG, and ILGLSIANAAHVSGLIIGLLMAF. The active-site Nucleophile is serine 202. Histidine 255 is a catalytic residue.

This sequence belongs to the peptidase S54 family.

It localises to the cell inner membrane. The enzyme catalyses Cleaves type-1 transmembrane domains using a catalytic dyad composed of serine and histidine that are contributed by different transmembrane domains.. Functionally, rhomboid-type serine protease that catalyzes intramembrane proteolysis. This chain is Rhomboid protease GlpG, found in Yersinia enterocolitica serotype O:8 / biotype 1B (strain NCTC 13174 / 8081).